The chain runs to 94 residues: MRLKPLGDRVVVKVIQAEEVTKGGVILPGTAKEKPQQGEVVAVGTGEYIDGKKVELEVKVGDRVIFSKYAGTEVKLDGEEYLLLRESDILAIIE.

As to quaternary structure, heptamer of 7 subunits arranged in a ring. Interacts with the chaperonin GroEL.

It localises to the cytoplasm. Its function is as follows. Together with the chaperonin GroEL, plays an essential role in assisting protein folding. The GroEL-GroES system forms a nano-cage that allows encapsulation of the non-native substrate proteins and provides a physical environment optimized to promote and accelerate protein folding. GroES binds to the apical surface of the GroEL ring, thereby capping the opening of the GroEL channel. The sequence is that of Co-chaperonin GroES from Thermoanaerobacter brockii (Thermoanaerobium brockii).